A 243-amino-acid chain; its full sequence is Zinc import ATP-binding protein ZnuC (243 aa).

The ABC transporter domain maps to 4–219; sequence IAAHHLAVRR…PEYRALFGHG (216 aa). An ATP-binding site is contributed by 36–43; that stretch reads GPNGSGKS.

The protein belongs to the ABC transporter superfamily. Zinc importer (TC 3.A.1.15.5) family. In terms of assembly, the complex is composed of two ATP-binding proteins (ZnuC), two transmembrane proteins (ZnuB) and a solute-binding protein (ZnuA).

The protein resides in the cell inner membrane. The catalysed reaction is Zn(2+)(out) + ATP(in) + H2O(in) = Zn(2+)(in) + ADP(in) + phosphate(in) + H(+)(in). Part of the ABC transporter complex ZnuABC involved in zinc import. Responsible for energy coupling to the transport system. This is Zinc import ATP-binding protein ZnuC from Cereibacter sphaeroides (strain ATCC 17023 / DSM 158 / JCM 6121 / CCUG 31486 / LMG 2827 / NBRC 12203 / NCIMB 8253 / ATH 2.4.1.) (Rhodobacter sphaeroides).